The following is a 1080-amino-acid chain: Presequence protease 1, chloroplastic/mitochondrial (1080 aa).

The N-terminal 85 residues, Met1–Ala85, are a transit peptide targeting the chloroplast and mitochondrion. Position 86 is an N-acetylvaline (Val86). His162 contacts Zn(2+). Glu165 serves as the catalytic Proton acceptor. Residue His166 participates in Zn(2+) binding. Glu240 is an active-site residue. Zn(2+) is bound at residue Glu262. Residues Glu571–Thr612 adopt a coiled-coil conformation. Arg705 is a binding site for Mg(2+).

This sequence belongs to the peptidase M16 family. PreP subfamily. Homodimer. Zn(2+) is required as a cofactor. Requires Mg(2+) as cofactor. In terms of tissue distribution, expressed only in siliques and flowers.

It localises to the plastid. The protein resides in the chloroplast stroma. It is found in the mitochondrion matrix. Inactive in the absence of MgCl(2) and CaCl(2) and full activation at 10 mM concentrations of either ion. Completely inhibited by the metal chelator orthophenanthroline, but not affected by phenylmethylsulfonyl fluoride (PMSF) or N-ethylmaleimide (NEM). Its function is as follows. ATP-independent protease that degrades both mitochondrial and chloroplastic transit peptides after their cleavage. Also degrades other unstructured peptides. Specific for peptides in the range of 10 to 65 residues. Shows a preference for cleavage after small polar residues and before basic residues, with a bias for positively charged amino acid residues. This chain is Presequence protease 1, chloroplastic/mitochondrial (PREP1), found in Arabidopsis thaliana (Mouse-ear cress).